We begin with the raw amino-acid sequence, 455 residues long: Serine--tRNA ligase (455 aa).

Thr252–Glu254 lines the L-serine pocket. ATP contacts are provided by residues Arg283–Glu285 and Val299. Glu306 provides a ligand contact to L-serine. Glu370–Ser373 serves as a coordination point for ATP. Residue Thr406 coordinates L-serine.

The protein belongs to the class-II aminoacyl-tRNA synthetase family. Type-1 seryl-tRNA synthetase subfamily. In terms of assembly, homodimer. The tRNA molecule binds across the dimer.

Its subcellular location is the cytoplasm. It catalyses the reaction tRNA(Ser) + L-serine + ATP = L-seryl-tRNA(Ser) + AMP + diphosphate + H(+). The enzyme catalyses tRNA(Sec) + L-serine + ATP = L-seryl-tRNA(Sec) + AMP + diphosphate + H(+). The protein operates within aminoacyl-tRNA biosynthesis; selenocysteinyl-tRNA(Sec) biosynthesis; L-seryl-tRNA(Sec) from L-serine and tRNA(Sec): step 1/1. Its function is as follows. Catalyzes the attachment of serine to tRNA(Ser). Is also able to aminoacylate tRNA(Sec) with serine, to form the misacylated tRNA L-seryl-tRNA(Sec), which will be further converted into selenocysteinyl-tRNA(Sec). In Pyrococcus horikoshii (strain ATCC 700860 / DSM 12428 / JCM 9974 / NBRC 100139 / OT-3), this protein is Serine--tRNA ligase.